Reading from the N-terminus, the 468-residue chain is Sushi repeat-containing protein SRPX2 (468 aa).

Positions 1 to 25 (MMTSPLTQRGALSLLLLLMPAVTPT) are cleaved as a signal peptide. Sushi domains are found at residues 72 to 122 (ATCY…YCRQ), 123 to 181 (IRCH…VCVD), and 265 to 324 (RRCP…VCTP). Cystine bridges form between cysteine 74/cysteine 108, cysteine 94/cysteine 120, cysteine 125/cysteine 166, and cysteine 152/cysteine 179. One can recognise an HYR domain in the interval 180-264 (VDIDPPKIRC…SCKFIVKVQV (85 aa)). 2 cysteine pairs are disulfide-bonded: cysteine 267–cysteine 309 and cysteine 295–cysteine 322.

As to quaternary structure, forms homooligomers. Interacts with PLAUR (via the UPAR/Ly6 domains), ADAMTS4 and CTSB. Interacts with HGF; the interaction increases the mitogenic activity of HGF. Post-translationally, contains chondroitin sulfate chains. In terms of tissue distribution, expressed in angiogenic endothelial cells (at protein level).

It is found in the secreted. Its subcellular location is the cytoplasm. The protein localises to the cell surface. The protein resides in the synapse. In terms of biological role, acts as a ligand for the urokinase plasminogen activator surface receptor. Plays a role in angiogenesis by inducing endothelial cell migration and the formation of vascular network (cords). Involved in cellular migration and adhesion. Increases the phosphorylation levels of FAK. Interacts with and increases the mitogenic activity of HGF. Promotes synapse formation. Required for ultrasonic vocalizations. The protein is Sushi repeat-containing protein SRPX2 (Srpx2) of Mus musculus (Mouse).